The primary structure comprises 225 residues: Pre-mRNA-splicing factor SPF27 (225 aa).

Position 2 is an N-acetylalanine (alanine 2). Position 94 is a phosphoserine (serine 94). Residues 138–222 adopt a coiled-coil conformation; the sequence is YNENLVHMIE…HGEANKENIR (85 aa).

Belongs to the SPF27 family. As to quaternary structure, component of the pre-catalytic and catalytic spliceosome complexes. Component of the postcatalytic spliceosome P complex. Component of the PRP19-CDC5L splicing complex composed of a core complex comprising a homotetramer of PRPF19, CDC5L, PLRG1 and BCAS2, and at least three less stably associated proteins CTNNBL1, CWC15 and HSPA8. Interacts directly in the complex with PRPF19, CDC5L and PLRG1. As to expression, ubiquitously expressed.

The protein resides in the nucleus. Its subcellular location is the nucleolus. Its function is as follows. Required for pre-mRNA splicing as component of the activated spliceosome. Component of the PRP19-CDC5L complex that forms an integral part of the spliceosome and is required for activating pre-mRNA splicing. May have a scaffolding role in the spliceosome assembly as it contacts all other components of the core complex. The PRP19-CDC5L complex may also play a role in the response to DNA damage (DDR). This chain is Pre-mRNA-splicing factor SPF27 (BCAS2), found in Homo sapiens (Human).